Here is a 430-residue protein sequence, read N- to C-terminus: tRNA(Ile)-lysidine synthase (430 aa).

Ser-21–Ser-26 provides a ligand contact to ATP.

It belongs to the tRNA(Ile)-lysidine synthase family.

It is found in the cytoplasm. The catalysed reaction is cytidine(34) in tRNA(Ile2) + L-lysine + ATP = lysidine(34) in tRNA(Ile2) + AMP + diphosphate + H(+). Functionally, ligates lysine onto the cytidine present at position 34 of the AUA codon-specific tRNA(Ile) that contains the anticodon CAU, in an ATP-dependent manner. Cytidine is converted to lysidine, thus changing the amino acid specificity of the tRNA from methionine to isoleucine. The protein is tRNA(Ile)-lysidine synthase of Salmonella schwarzengrund (strain CVM19633).